The primary structure comprises 937 residues: MSMNRREFLKTTAAAAAASAVGISIPSEAKAAAENTQAGWQWDKAVCRFCGTGCGIMVAVKDDKIVAVKGDPESPVNRGINCIKGYFNAKIMYGADRLTQPLLRMNDKGEFDKNGKFRPVSWKRAFDEMEKQFKKYYNELGPTGVAVFGSGQYTIQEGYAAVKLVKAGWRSNNIDPNARHCMASAVVGFYQTFGIDEPAGCYDDIEITDTVFVWGANMAEMHPILWSRVSDAKLNNPDKYFIVNLSTYRNRCSNLADMEIIFRPNADLAIMNYLGREILKRNAVNWDFVKKHTIFATGHADIGYGMRNPNSPHVTDKERDTVAKQVAKVVTEEEAVALSPIGKWKAGDEMQMTHTAGKKPFWHWQISFDDFKKAVEPYTLDYVAKVAKGDPDESLDSFKRKLQKLADLYCDPNRKALSFWTMGFNQHVRGSWINELVYMVHLLLGKQSQPGSGAFSLTGQPSACGTAREVGTFAHRLPADMLVGNPKHRKITEKMWKIPEGTLNPKVGSHFLKIMRDIEDGKIKWAWVHVNNPWQNTANANHWIKAARTMDNFIVVNEAYPGVSARVADLILPVSMIYEKWGAYGNAERRTQHWRQQVTPPGEAMPDLWTIMEFSKRFKLKEVWKAHPQAKLPSVLDKAQAMGYDPEMTLFDVLFNRPEYRKNFPWPDPIAKNPQTGKLHANTEAGGDGRTIIGADGKEWKGYGFFVHKALWEEYRKFGLGHAHDLADFDTYHKVRGLRWPVVNGKETKWRFNAEYDPYARKYAKPGEKFAFYGPLLKALKRGDLKGPKTKQKYSLKNKAKIFWRPFMVHPEDPKYDTKGYNFWLCTGRVLEHWHSGTMTMRVPELYRAMPEALCYMNPKDAKELGLNRFDLVVVESRRGKVKARVETRGRNKPPRGLVYVPWFDEKVLINKVCLDATCPLSKETDYKKAAVKVYKA.

Positions 1–31 (MSMNRREFLKTTAAAAAASAVGISIPSEAKA) form a signal peptide, tat-type signal. Positions 40–96 (WQWDKAVCRFCGTGCGIMVAVKDDKIVAVKGDPESPVNRGINCIKGYFNAKIMYGAD) constitute a 4Fe-4S Mo/W bis-MGD-type domain. [4Fe-4S] cluster contacts are provided by cysteine 47, cysteine 50, cysteine 54, and cysteine 82. Mo-bis(molybdopterin guanine dinucleotide) contacts are provided by residues lysine 84, glutamine 152, asparagine 177, cysteine 181, 214–221 (WGANMAEM), methionine 422, glutamine 426, asparagine 532, lysine 580, aspartate 607, and 827–836 (TGRVLEHWHS). Tryptophan 903 provides a ligand contact to substrate. Positions 911 and 928 each coordinate Mo-bis(molybdopterin guanine dinucleotide).

It belongs to the prokaryotic molybdopterin-containing oxidoreductase family. NasA/NapA/NarB subfamily. As to quaternary structure, component of the periplasmic nitrate reductase NapAB complex composed of NapA and NapB. Requires [4Fe-4S] cluster as cofactor. Mo-bis(molybdopterin guanine dinucleotide) serves as cofactor. In terms of processing, predicted to be exported by the Tat system. The position of the signal peptide cleavage has not been experimentally proven.

The protein resides in the periplasm. It catalyses the reaction 2 Fe(II)-[cytochrome] + nitrate + 2 H(+) = 2 Fe(III)-[cytochrome] + nitrite + H2O. Its function is as follows. Catalytic subunit of the periplasmic nitrate reductase complex NapAB. Receives electrons from NapB and catalyzes the reduction of nitrate to nitrite. The sequence is that of Periplasmic nitrate reductase from Nautilia profundicola (strain ATCC BAA-1463 / DSM 18972 / AmH).